The following is a 236-amino-acid chain: Uridylate kinase (236 aa).

10 to 13 contributes to the ATP binding site; sequence KLSG. The segment at 18–23 is involved in allosteric activation by GTP; the sequence is GEDGYG. G52 serves as a coordination point for UMP. ATP is bound by residues G53 and R57. UMP is bound by residues D72 and 133-140; that span reads TGNPYFTT. Positions 160, 166, and 169 each coordinate ATP.

This sequence belongs to the UMP kinase family. As to quaternary structure, homohexamer.

It localises to the cytoplasm. It carries out the reaction UMP + ATP = UDP + ADP. The protein operates within pyrimidine metabolism; CTP biosynthesis via de novo pathway; UDP from UMP (UMPK route): step 1/1. With respect to regulation, allosterically activated by GTP. Inhibited by UTP. In terms of biological role, catalyzes the reversible phosphorylation of UMP to UDP. In Chlorobium phaeobacteroides (strain DSM 266 / SMG 266 / 2430), this protein is Uridylate kinase.